Here is a 264-residue protein sequence, read N- to C-terminus: Thymidylate synthase (264 aa).

R21 lines the dUMP pocket. H51 provides a ligand contact to (6R)-5,10-methylene-5,6,7,8-tetrahydrofolate. 126–127 contacts dUMP; that stretch reads RR. C146 functions as the Nucleophile in the catalytic mechanism. Residues 166–169, N177, and 207–209 each bind dUMP; these read RSCD and HLY. D169 is a binding site for (6R)-5,10-methylene-5,6,7,8-tetrahydrofolate. A263 is a (6R)-5,10-methylene-5,6,7,8-tetrahydrofolate binding site.

The protein belongs to the thymidylate synthase family. Bacterial-type ThyA subfamily. In terms of assembly, homodimer.

It localises to the cytoplasm. It carries out the reaction dUMP + (6R)-5,10-methylene-5,6,7,8-tetrahydrofolate = 7,8-dihydrofolate + dTMP. It participates in pyrimidine metabolism; dTTP biosynthesis. Its function is as follows. Catalyzes the reductive methylation of 2'-deoxyuridine-5'-monophosphate (dUMP) to 2'-deoxythymidine-5'-monophosphate (dTMP) while utilizing 5,10-methylenetetrahydrofolate (mTHF) as the methyl donor and reductant in the reaction, yielding dihydrofolate (DHF) as a by-product. This enzymatic reaction provides an intracellular de novo source of dTMP, an essential precursor for DNA biosynthesis. The polypeptide is Thymidylate synthase (Shewanella amazonensis (strain ATCC BAA-1098 / SB2B)).